A 92-amino-acid chain; its full sequence is Bombyxin A-5 (92 aa).

A signal peptide spans 1–19 (MKLLLAIALMLTTVMWAST). Gln-20 bears the Pyrrolidone carboxylic acid mark. 3 disulfide bridges follow: Cys-29–Cys-79, Cys-41–Cys-92, and Cys-78–Cys-83. Positions 50–71 (SDAQFASYGSAWLMPYSEGRDQ) are cleaved as a propeptide — c peptide like.

Belongs to the insulin family. Heterodimer of a B chain and an A chain linked by two disulfide bonds.

The protein localises to the secreted. Its function is as follows. Brain peptide responsible for activation of prothoracic glands to produce ecdysone in insects. This is Bombyxin A-5 (BBXA5) from Bombyx mori (Silk moth).